The sequence spans 339 residues: Holliday junction branch migration complex subunit RuvB (339 aa).

The tract at residues 1 to 181 is large ATPase domain (RuvB-L); that stretch reads MEERLVSGYE…FGMVHRLEFY (181 aa). ATP is bound by residues L20, R21, G62, K65, T66, T67, 128-130, R171, Y181, and R218; that span reads EDF. A Mg(2+)-binding site is contributed by T66. Residues 182-252 form a small ATPAse domain (RuvB-S) region; that stretch reads SVEELMLIIN…NAKAALDLLE (71 aa). Positions 255 to 339 are head domain (RuvB-H); the sequence is ELGLDPTDRL…NKNAGELSLW (85 aa). 2 residues coordinate DNA: R310 and R315.

The protein belongs to the RuvB family. As to quaternary structure, homohexamer. Forms an RuvA(8)-RuvB(12)-Holliday junction (HJ) complex. HJ DNA is sandwiched between 2 RuvA tetramers; dsDNA enters through RuvA and exits via RuvB. An RuvB hexamer assembles on each DNA strand where it exits the tetramer. Each RuvB hexamer is contacted by two RuvA subunits (via domain III) on 2 adjacent RuvB subunits; this complex drives branch migration. In the full resolvosome a probable DNA-RuvA(4)-RuvB(12)-RuvC(2) complex forms which resolves the HJ.

It localises to the cytoplasm. The enzyme catalyses ATP + H2O = ADP + phosphate + H(+). In terms of biological role, the RuvA-RuvB-RuvC complex processes Holliday junction (HJ) DNA during genetic recombination and DNA repair, while the RuvA-RuvB complex plays an important role in the rescue of blocked DNA replication forks via replication fork reversal (RFR). RuvA specifically binds to HJ cruciform DNA, conferring on it an open structure. The RuvB hexamer acts as an ATP-dependent pump, pulling dsDNA into and through the RuvAB complex. RuvB forms 2 homohexamers on either side of HJ DNA bound by 1 or 2 RuvA tetramers; 4 subunits per hexamer contact DNA at a time. Coordinated motions by a converter formed by DNA-disengaged RuvB subunits stimulates ATP hydrolysis and nucleotide exchange. Immobilization of the converter enables RuvB to convert the ATP-contained energy into a lever motion, pulling 2 nucleotides of DNA out of the RuvA tetramer per ATP hydrolyzed, thus driving DNA branch migration. The RuvB motors rotate together with the DNA substrate, which together with the progressing nucleotide cycle form the mechanistic basis for DNA recombination by continuous HJ branch migration. Branch migration allows RuvC to scan DNA until it finds its consensus sequence, where it cleaves and resolves cruciform DNA. This Carboxydothermus hydrogenoformans (strain ATCC BAA-161 / DSM 6008 / Z-2901) protein is Holliday junction branch migration complex subunit RuvB.